A 259-amino-acid polypeptide reads, in one-letter code: Type III pantothenate kinase (259 aa).

Residue 6 to 13 (DCGNTNTV) coordinates ATP. A substrate-binding site is contributed by 107–110 (GPDR). D109 serves as the catalytic Proton acceptor. K(+) is bound at residue D129. Residue T132 participates in ATP binding. Substrate is bound at residue T184.

It belongs to the type III pantothenate kinase family. As to quaternary structure, homodimer. Requires NH4(+) as cofactor. K(+) is required as a cofactor.

The protein localises to the cytoplasm. It catalyses the reaction (R)-pantothenate + ATP = (R)-4'-phosphopantothenate + ADP + H(+). Its pathway is cofactor biosynthesis; coenzyme A biosynthesis; CoA from (R)-pantothenate: step 1/5. Its function is as follows. Catalyzes the phosphorylation of pantothenate (Pan), the first step in CoA biosynthesis. This chain is Type III pantothenate kinase, found in Ruegeria pomeroyi (strain ATCC 700808 / DSM 15171 / DSS-3) (Silicibacter pomeroyi).